Here is a 261-residue protein sequence, read N- to C-terminus: uncharacterized protein (261 aa).

The signal sequence occupies residues 1–22 (MGYLKKVGMCISLLIVIIFVTS). C23 carries N-palmitoyl cysteine lipidation. C23 carries the S-diacylglycerol cysteine lipid modification.

The protein belongs to the staphylococcal tandem lipoprotein family.

It is found in the cell membrane. This is an uncharacterized protein from Staphylococcus aureus (strain bovine RF122 / ET3-1).